The following is a 503-amino-acid chain: Aromatase (503 aa).

The next 3 membrane-spanning stretches (helical) occupy residues 19–39 (EVVP…LLVW), 53–73 (FLGI…IGSA), and 303–323 (MLIA…FLIA). The substrate site is built by Asp-309 and Met-374. Heme is bound at residue Cys-437.

It belongs to the cytochrome P450 family. Heme serves as cofactor.

It is found in the endoplasmic reticulum membrane. The protein localises to the microsome membrane. The enzyme catalyses testosterone + 3 reduced [NADPH--hemoprotein reductase] + 3 O2 = 17beta-estradiol + formate + 3 oxidized [NADPH--hemoprotein reductase] + 4 H2O + 4 H(+). It carries out the reaction androst-4-ene-3,17-dione + 3 reduced [NADPH--hemoprotein reductase] + 3 O2 = estrone + formate + 3 oxidized [NADPH--hemoprotein reductase] + 4 H2O + 4 H(+). It catalyses the reaction androst-4-ene-3,17-dione + reduced [NADPH--hemoprotein reductase] + O2 = 19-hydroxyandrost-4-ene-3,17-dione + oxidized [NADPH--hemoprotein reductase] + H2O + H(+). The catalysed reaction is 19-hydroxyandrost-4-ene-3,17-dione + reduced [NADPH--hemoprotein reductase] + O2 = 19-oxo-androst-4-ene-3,17-dione + oxidized [NADPH--hemoprotein reductase] + 2 H2O + H(+). The enzyme catalyses 19-oxo-androst-4-ene-3,17-dione + reduced [NADPH--hemoprotein reductase] + O2 = estrone + formate + oxidized [NADPH--hemoprotein reductase] + H2O + 2 H(+). It carries out the reaction estrone + reduced [NADPH--hemoprotein reductase] + O2 = 2-hydroxyestrone + oxidized [NADPH--hemoprotein reductase] + H2O + H(+). It catalyses the reaction 17beta-hydroxy-5alpha-androstan-3-one + reduced [NADPH--hemoprotein reductase] + O2 = 17beta,19-dihydroxy-3-oxo-5alpha-androstanone + oxidized [NADPH--hemoprotein reductase] + H2O + H(+). The catalysed reaction is 17beta,19-dihydroxy-3-oxo-5alpha-androstanone + reduced [NADPH--hemoprotein reductase] + O2 = 17beta-hydroxy-3,19-dioxo-5alpha-androstanone + oxidized [NADPH--hemoprotein reductase] + 2 H2O + H(+). The enzyme catalyses 17beta-hydroxy-3,19-dioxo-5alpha-androstanone + reduced [NADPH--hemoprotein reductase] + O2 = 17beta-hydroxy-3-oxo-19-nor-5alpha-androst-1-ene + formate + oxidized [NADPH--hemoprotein reductase] + H2O + 2 H(+). Its pathway is steroid hormone biosynthesis. Functionally, a cytochrome P450 monooxygenase that catalyzes the conversion of C19 androgens, androst-4-ene-3,17-dione (androstenedione) and testosterone to the C18 estrogens, estrone and estradiol, respectively. Catalyzes three successive oxidations of C19 androgens: two conventional oxidations at C19 yielding 19-hydroxy and 19-oxo/19-aldehyde derivatives, followed by a third oxidative aromatization step that involves C1-beta hydrogen abstraction combined with cleavage of the C10-C19 bond to yield a phenolic A ring and formic acid. Alternatively, the third oxidative reaction yields a 19-norsteroid and formic acid. Converts dihydrotestosterone to delta1,10-dehydro 19-nordihydrotestosterone and may play a role in homeostasis of this potent androgen. Also displays 2-hydroxylase activity toward estrone. Mechanistically, uses molecular oxygen inserting one oxygen atom into a substrate, and reducing the second into a water molecule, with two electrons provided by NADPH via cytochrome P450 reductase (CPR; NADPH-ferrihemoprotein reductase). The chain is Aromatase (CYP19A1) from Capra hircus (Goat).